Reading from the N-terminus, the 345-residue chain is Aspartate--ammonia ligase (345 aa).

It belongs to the class-II aminoacyl-tRNA synthetase family. AsnA subfamily.

The protein localises to the cytoplasm. It catalyses the reaction L-aspartate + NH4(+) + ATP = L-asparagine + AMP + diphosphate + H(+). Its pathway is amino-acid biosynthesis; L-asparagine biosynthesis; L-asparagine from L-aspartate (ammonia route): step 1/1. The sequence is that of Aspartate--ammonia ligase from Parabacteroides distasonis (strain ATCC 8503 / DSM 20701 / CIP 104284 / JCM 5825 / NCTC 11152).